Consider the following 59-residue polypeptide: Antitoxin Rv0909 (59 aa).

Its function is as follows. Antitoxin component of a type II toxin-antitoxin (TA) system. Upon expression in M.smegmatis neutralizes the effect of cognate toxin Rv0910. In Mycobacterium tuberculosis (strain ATCC 25618 / H37Rv), this protein is Antitoxin Rv0909.